The primary structure comprises 419 residues: Metacaspase-1B (419 aa).

The tract at residues 1-109 (MYHPNYNYPP…PPMEAQQFGK (109 aa)) is disordered. A compositionally biased stretch (pro residues) spans 33–50 (SPPPPQPYYSNGYPPPSQ). The span at 51-66 (SPHSYSPPQYPPHGQY) shows a compositional bias: low complexity. Positions 82-93 (QYRSYHSHSPSW) are enriched in polar residues. Residues His210 and Cys266 contribute to the active site.

It belongs to the peptidase C14B family.

Involved in cell death (apoptosis). In Aspergillus oryzae (strain ATCC 42149 / RIB 40) (Yellow koji mold), this protein is Metacaspase-1B (casB).